The chain runs to 204 residues: Probable nicotinate-nucleotide adenylyltransferase (204 aa).

Belongs to the NadD family.

The enzyme catalyses nicotinate beta-D-ribonucleotide + ATP + H(+) = deamido-NAD(+) + diphosphate. The protein operates within cofactor biosynthesis; NAD(+) biosynthesis; deamido-NAD(+) from nicotinate D-ribonucleotide: step 1/1. Its function is as follows. Catalyzes the reversible adenylation of nicotinate mononucleotide (NaMN) to nicotinic acid adenine dinucleotide (NaAD). The polypeptide is Probable nicotinate-nucleotide adenylyltransferase (Methylacidiphilum infernorum (isolate V4) (Methylokorus infernorum (strain V4))).